A 313-amino-acid polypeptide reads, in one-letter code: Ankyrin repeat family A protein 2 (313 aa).

5 ANK repeats span residues 148–180 (ANSLSVHQLAAQGEMLYLATRIEQENVINHTDE), 181–213 (EGFTPLMWAAAHGQIAVVEFLLQNGADPQLLGK), 214–246 (GRESALSLACSKGYTDIVKMLLDCGVDVNEYDW), 247–279 (NGGTPLLYAVHGNHVKCVKMLLENGADPTIETD), and 280–313 (SGYNSMDLAVALGYRSVQQVIESHLLKLLQNIKE).

As to quaternary structure, interacts (via ANK repeats) with CCDC8 (via PxLPxI/L motif); mediates the interaction with the 3M complex which is composed of CCDC8, CUL7 and OBSL1. Interacts (via ANK repeats) with HDAC4 (via PxLPxI/L motif). Interacts (via ANK repeats) with HDAC5 (via PxLPxI/L motif). Interacts (via ANK repeats) with LRP2/megalin (via PxLPxI/L motif). Interacts (via ANK repeats) with RFX7 (via PxLPxI/L motif). Interacts with AHRR. Interacts with NEK6.

The protein localises to the cytoplasm. Its subcellular location is the cytoskeleton. It localises to the membrane. Its function is as follows. May regulate the interaction between the 3M complex and the histone deacetylases HDAC4 and HDAC5. May also regulate LRP2/megalin. The polypeptide is Ankyrin repeat family A protein 2 (ANKRA2) (Bos taurus (Bovine)).